We begin with the raw amino-acid sequence, 116 residues long: Iron-sulfur cluster insertion protein ErpA (116 aa).

Iron-sulfur cluster contacts are provided by cysteine 44, cysteine 108, and cysteine 110.

This sequence belongs to the HesB/IscA family. In terms of assembly, homodimer. Iron-sulfur cluster is required as a cofactor.

Its function is as follows. Required for insertion of 4Fe-4S clusters for at least IspG. The protein is Iron-sulfur cluster insertion protein ErpA of Shewanella piezotolerans (strain WP3 / JCM 13877).